Consider the following 300-residue polypeptide: 4-hydroxy-tetrahydrodipicolinate synthase (300 aa).

A pyruvate-binding site is contributed by Thr-46. Residue Tyr-135 is the Proton donor/acceptor of the active site. Catalysis depends on Lys-163, which acts as the Schiff-base intermediate with substrate. Val-205 serves as a coordination point for pyruvate.

It belongs to the DapA family. As to quaternary structure, homotetramer; dimer of dimers.

The protein localises to the cytoplasm. It carries out the reaction L-aspartate 4-semialdehyde + pyruvate = (2S,4S)-4-hydroxy-2,3,4,5-tetrahydrodipicolinate + H2O + H(+). The protein operates within amino-acid biosynthesis; L-lysine biosynthesis via DAP pathway; (S)-tetrahydrodipicolinate from L-aspartate: step 3/4. Catalyzes the condensation of (S)-aspartate-beta-semialdehyde [(S)-ASA] and pyruvate to 4-hydroxy-tetrahydrodipicolinate (HTPA). The chain is 4-hydroxy-tetrahydrodipicolinate synthase from Koribacter versatilis (strain Ellin345).